The following is a 195-amino-acid chain: O-methyltransferase (195 aa).

It belongs to the methyltransferase superfamily.

It participates in secondary metabolite biosynthesis. O-methyltransferase; part of the gene cluster that mediates the biosynthesis of pyrophen and campyrone B, which represent a class of fungal amino acid-derived alpha-pyrone natural products. The first step of pyrophen biosynthesis is catalyzed by the PKS-NRPS hybrid synthetase ATPKS that uptakes and condensates L-phenylalanine and malonyl-CoA in order to produce desmethyldesacetylpyrophen. Although the A domain does not discriminate between 2 enantiomeric phenylalanines, the downstream KS domain must play a gate keeping role to stereoselectively accept the L-phenylalanyl-S-phosphopantetheine (Ppant)-T domain intermediate for chain elongation. The resulting amino acid derived diketide is off-loaded through lactonization to yield the alpha-pyrone intermediate desmethyldesacetylpyrophen. The cluster-specific O-methyltransferase (OMT) then methylates desmethyldesacetylpyrophen to desacetylpyrophen, which is further acetylated to pyrophen by an endogenous yet unidentified N-acetyltransferase. ATPKS has relaxed substrate specificity to activate and extend branched-chain amino acid L-leucine to produce small amounts of campyrone B. The sequence is that of O-methyltransferase from Aspergillus niger (strain ATCC 1015 / CBS 113.46 / FGSC A1144 / LSHB Ac4 / NCTC 3858a / NRRL 328 / USDA 3528.7).